Reading from the N-terminus, the 196-residue chain is Chromophore lyase CpcT/CpeT (196 aa).

This sequence belongs to the CpcT/CpeT biliprotein lyase family.

In terms of biological role, covalently attaches a chromophore to Cys residue(s) of phycobiliproteins. This Synechococcus sp. (strain WH8020) protein is Chromophore lyase CpcT/CpeT.